We begin with the raw amino-acid sequence, 331 residues long: 6-phosphogluconolactonase (331 aa).

The protein belongs to the cycloisomerase 2 family.

The catalysed reaction is 6-phospho-D-glucono-1,5-lactone + H2O = 6-phospho-D-gluconate + H(+). Its pathway is carbohydrate degradation; pentose phosphate pathway; D-ribulose 5-phosphate from D-glucose 6-phosphate (oxidative stage): step 2/3. Catalyzes the hydrolysis of 6-phosphogluconolactone to 6-phosphogluconate. The protein is 6-phosphogluconolactonase of Salmonella gallinarum (strain 287/91 / NCTC 13346).